The following is a 209-amino-acid chain: Probable glutathione peroxidase 8 (209 aa).

Position 1 is an N-acetylmethionine (Met-1). Residues 18–40 form a helical membrane-spanning segment; the sequence is VFAVLLSIVLCTVTLFLLQLKFL. Cys-79 is a catalytic residue.

It belongs to the glutathione peroxidase family.

It is found in the membrane. The enzyme catalyses 2 glutathione + H2O2 = glutathione disulfide + 2 H2O. The protein is Probable glutathione peroxidase 8 (GPX8) of Homo sapiens (Human).